The following is a 160-amino-acid chain: Aspartate carbamoyltransferase regulatory chain (160 aa).

The Zn(2+) site is built by cysteine 110, cysteine 115, cysteine 140, and cysteine 143.

This sequence belongs to the PyrI family. In terms of assembly, contains catalytic and regulatory chains. It depends on Zn(2+) as a cofactor.

In terms of biological role, involved in allosteric regulation of aspartate carbamoyltransferase. This Hyperthermus butylicus (strain DSM 5456 / JCM 9403 / PLM1-5) protein is Aspartate carbamoyltransferase regulatory chain.